The following is a 510-amino-acid chain: 3,4-dihydroxyphenylacetaldehyde synthase (510 aa).

The active site involves asparagine 192. An N6-(pyridoxal phosphate)lysine modification is found at lysine 303.

Belongs to the group II decarboxylase family. Pyridoxal 5'-phosphate serves as cofactor.

It carries out the reaction L-dopa + O2 + H2O + H(+) = 3,4-dihydroxyphenylacetaldehyde + H2O2 + NH4(+) + CO2. Functionally, catalyzes the decarboxylation-oxidative deamination of L-3,4-dihydroxyphenylalanine (L-DOPA) to 3,4-dihydroxylphenylacetaldehyde (DHPAA). Involved in cuticle development. Probably responsible for the protein cross-linking during the development of flexible cuticles. The chain is 3,4-dihydroxyphenylacetaldehyde synthase (amd) from Drosophila melanogaster (Fruit fly).